The primary structure comprises 266 residues: UPF0294 protein Ent638_0743 (266 aa).

This sequence belongs to the UPF0294 family.

Its subcellular location is the cytoplasm. This Enterobacter sp. (strain 638) protein is UPF0294 protein Ent638_0743.